Consider the following 79-residue polypeptide: Sulfur carrier protein TusA (79 aa).

The active-site Cysteine persulfide intermediate is Cys-16.

It belongs to the sulfur carrier protein TusA family.

It localises to the cytoplasm. Sulfur carrier protein which probably makes part of a sulfur-relay system. This Pseudomonas paraeruginosa (strain DSM 24068 / PA7) (Pseudomonas aeruginosa (strain PA7)) protein is Sulfur carrier protein TusA.